A 92-amino-acid polypeptide reads, in one-letter code: Small ribosomal subunit protein uS19 (92 aa).

This sequence belongs to the universal ribosomal protein uS19 family.

Protein S19 forms a complex with S13 that binds strongly to the 16S ribosomal RNA. The sequence is that of Small ribosomal subunit protein uS19 from Staphylococcus aureus (strain Mu3 / ATCC 700698).